Consider the following 284-residue polypeptide: D-tagatose-1,6-bisphosphate aldolase subunit GatY (284 aa).

Residue Asp82 is the Proton donor of the active site. Zn(2+) contacts are provided by His83 and His180. A dihydroxyacetone phosphate-binding site is contributed by Gly181. His208 contacts Zn(2+). Dihydroxyacetone phosphate contacts are provided by residues 209 to 211 and 230 to 233; these read GAS and NVAT.

The protein belongs to the class II fructose-bisphosphate aldolase family. TagBP aldolase GatY subfamily. In terms of assembly, forms a complex with GatZ. Zn(2+) serves as cofactor.

The enzyme catalyses D-tagatofuranose 1,6-bisphosphate = D-glyceraldehyde 3-phosphate + dihydroxyacetone phosphate. It functions in the pathway carbohydrate metabolism; D-tagatose 6-phosphate degradation; D-glyceraldehyde 3-phosphate and glycerone phosphate from D-tagatose 6-phosphate: step 2/2. Functionally, catalytic subunit of the tagatose-1,6-bisphosphate aldolase GatYZ, which catalyzes the reversible aldol condensation of dihydroxyacetone phosphate (DHAP or glycerone-phosphate) with glyceraldehyde 3-phosphate (G3P) to produce tagatose 1,6-bisphosphate (TBP). Requires GatZ subunit for full activity and stability. Is involved in the catabolism of galactitol. This chain is D-tagatose-1,6-bisphosphate aldolase subunit GatY, found in Salmonella typhi.